We begin with the raw amino-acid sequence, 472 residues long: RNA pseudouridine synthase 6, chloroplastic (472 aa).

The N-terminal 66 residues, Met1–Ser66, are a transit peptide targeting the chloroplast. The S4 RNA-binding domain occupies Val101–Lys208. Asp261 is an active-site residue.

It belongs to the pseudouridine synthase RluA family.

The protein localises to the plastid. Its subcellular location is the chloroplast. It catalyses the reaction a uridine in RNA = a pseudouridine in RNA. This Arabidopsis thaliana (Mouse-ear cress) protein is RNA pseudouridine synthase 6, chloroplastic.